Consider the following 1234-residue polypeptide: Protein Jumonji (1234 aa).

The segment covering 1 to 11 (MSKERPKRNII) has biased composition (basic residues). 4 disordered regions span residues 1–22 (MSKERPKRNIIQKKYDDSDGIP), 68–150 (AKAL…LSKR), 169–339 (LPNS…VKYT), and 354–548 (RELV…GKSG). Ser-78 carries the phosphoserine modification. The segment covering 86–98 (SQVSSTSNDVSSS) has biased composition (low complexity). Positions 104–110 (PSRKRPR) match the Nuclear localization signal motif. The span at 117-129 (FAQSQPNSPSTTP) shows a compositional bias: polar residues. The tract at residues 141 to 170 (ATQISDLSKRKPKTEDFLTFLCLRGSPALP) is sufficient for interaction with the PRC2 complex. Positions 180–193 (QDEEDVEEEDDETE) are enriched in acidic residues. The segment covering 197-210 (ATTNNASSSCQSTP) has biased composition (polar residues). Over residues 211 to 221 (RKGKTHKHVHN) the composition is skewed to basic residues. The span at 244 to 264 (KEATPGKEKHSEPRADSRREQ) shows a compositional bias: basic and acidic residues. Residues 265 to 285 (ASGAQPTAASAAASSAKGLAA) are compositionally biased toward low complexity. Composition is skewed to polar residues over residues 304–322 (SKVNGVTRMSSLGAGTNSA) and 369–384 (SAVNHTISGKTESSNA). Lys-378 is subject to N6-acetyllysine. Residues 418–440 (CTKEVGGRQLREGLRNSKRRLEE) show a composition bias toward basic and acidic residues. At Ser-449 the chain carries Phosphoserine. 2 stretches are compositionally biased toward basic and acidic residues: residues 482–494 (VKKEVPERSLERN) and 529–544 (SSHKPHDPQGKPEKGS). The JmjN domain maps to 555 to 596 (IPVLRPSAKEFHDPLIYIESVRAQVEKYGMCRVIPPPDWRPE). Residues 619 to 711 (WGPNVQRLAC…YLLSYDSLSP (93 aa)) form the ARID domain. The short motif at 872–876 (GSGFP) is the GSGFP motif element. Residues 882–1046 (PFSRHGWNLT…MGFETAKEMK (165 aa)) form the JmjC domain. Residues 1206 to 1234 (ENCLNKPTPKRGPRKRATVDVPPSRLPSS) form a disordered region.

This sequence belongs to the JARID2 family. In terms of assembly, associates with the PRC2 complex, which consists of the core components EED, EZH1 or EZH2, SUZ12, and RBBP4, and various combinations of accessory subunits including AEBP2, JARID2, PHF19, MTF2 and EPOP. Found in a monomeric PRC2.2 (class 2) complex consisting of at least SUZ12, RBBP4, AEBP2 and JARID2. Facilitates nucleosome binding of the PRC2 complex. Interacts with SUZ12 (via C2H2-type zinc finger domain); the interaction is direct; competes with EPOP for SUZ12 binding. Interacts with histone methyltransferases EHMT1/GLP1 and EHMT2/G9a. Interacts with GATA4 (via the N-terminal region). Interacts with NKX2-5 (via the C-terminal region). Interacts with RB1. Interacts with ZNF496. Interacts with ESRRB. Interacts with DDX18; this interaction inhibits the PRC2 complex. In terms of tissue distribution, widely expressed in embryos. In adults, expressed at high levels in heart, skeletal muscle, brain and thymus.

It localises to the nucleus. In terms of biological role, regulator of histone methyltransferase complexes that plays an essential role in embryonic development, including heart and liver development, neural tube fusion process and hematopoiesis. Acts as an accessory subunit for the core PRC2 (Polycomb repressive complex 2) complex, which mediates histone H3K27 (H3K27me3) trimethylation on chromatin. Binds DNA and mediates the recruitment of the PRC2 complex to target genes in embryonic stem cells, thereby playing a key role in stem cell differentiation and normal embryonic development. In cardiac cells, it is required to repress expression of cyclin-D1 (CCND1) by activating methylation of 'Lys-9' of histone H3 (H3K9me) by the GLP1/EHMT1 and G9a/EHMT2 histone methyltransferases. Also acts as a transcriptional repressor of ANF via its interaction with GATA4 and NKX2-5. Participates in the negative regulation of cell proliferation signaling. Does not have histone demethylase activity. This Mus musculus (Mouse) protein is Protein Jumonji (Jarid2).